The sequence spans 103 residues: Large ribosomal subunit protein bL21 (103 aa).

It belongs to the bacterial ribosomal protein bL21 family. As to quaternary structure, part of the 50S ribosomal subunit. Contacts protein L20.

This protein binds to 23S rRNA in the presence of protein L20. In Maridesulfovibrio salexigens (strain ATCC 14822 / DSM 2638 / NCIMB 8403 / VKM B-1763) (Desulfovibrio salexigens), this protein is Large ribosomal subunit protein bL21.